The chain runs to 116 residues: Putative iron-sulfur cluster insertion protein ErpA (116 aa).

Cys-44, Cys-108, and Cys-110 together coordinate iron-sulfur cluster.

It belongs to the HesB/IscA family. Homodimer. Iron-sulfur cluster is required as a cofactor.

Required for insertion of 4Fe-4S clusters. The sequence is that of Putative iron-sulfur cluster insertion protein ErpA from Herminiimonas arsenicoxydans.